The chain runs to 246 residues: MYQIEFKEEAFLPRERLVEVGAERLSNQELLAIFIRTGTKKEPVSILSNKLLNRLESLAALRELSIEELQSLTGIGRVKAIEIKAMIELGKRINQSELLLNERILGSEKLGRKMIHEIGHKKQEHLVALYLNTQNQIISQKTIFIGSVNRSIAEPREILHYAVKCMATSIIIVHNHPSGSVQPSRNDLLFTENLKESCEKLGLVLLDHLIVGNKDYYSFREESDVILKFIDNIVEEVFFNLTFTVE.

One can recognise an MPN domain in the interval 103–225 (RILGSEKLGR…YYSFREESDV (123 aa)). Zn(2+)-binding residues include H174, H176, and D187. The JAMM motif signature appears at 174-187 (HNHPSGSVQPSRND).

It belongs to the UPF0758 family.

The chain is UPF0758 protein SSU98_1084 from Streptococcus suis (strain 98HAH33).